Reading from the N-terminus, the 208-residue chain is MKRTATLLVVALILALNTAQAGQLQALEDYYRDVETVQGVFNQFTLDDRGQVIEESSGDFAIHRPDRFHWSYAGPFSQEIIADGERLWVYDVELDQVTVRDQRAVLGSAPAQLLSGDYADLEELFELAETEDYVRLTPRDGGEAFDEARLGMRDGHPSALEIDDALGQVTRVELDEVRLNDAVDEERFRFEPPEGVDVYEADPDEGIR.

Residues 1–21 (MKRTATLLVVALILALNTAQA) form the signal peptide.

Belongs to the LolA family. As to quaternary structure, monomer.

Its subcellular location is the periplasm. Functionally, participates in the translocation of lipoproteins from the inner membrane to the outer membrane. Only forms a complex with a lipoprotein if the residue after the N-terminal Cys is not an aspartate (The Asp acts as a targeting signal to indicate that the lipoprotein should stay in the inner membrane). This is Outer-membrane lipoprotein carrier protein from Halorhodospira halophila (strain DSM 244 / SL1) (Ectothiorhodospira halophila (strain DSM 244 / SL1)).